The sequence spans 364 residues: C3a anaphylatoxin chemotactic receptor (364 aa).

Residues 1 to 50 are Extracellular-facing; it reads MGDNMDFSEHYGNFSENYVTESYGEFDLYYDPLNETSLSEQGHRSIWVLS. Residues Asn-13 and Asn-34 are each glycosylated (N-linked (GlcNAc...) asparagine). Residues 51–71 form a helical membrane-spanning segment; it reads IVLCSIACVLGITGNAFVIWI. The Cytoplasmic segment spans residues 72–82; it reads AGVKMKRTVNT. A helical membrane pass occupies residues 83–103; the sequence is IWFVNLAAADLLCCVSIPFSI. The Extracellular segment spans residues 104–120; the sequence is ADIILNSHWPYGEAMCK. Cys-119 and Cys-198 are disulfide-bonded. A helical transmembrane segment spans residues 121–141; the sequence is ILPSMVVLNMFASVFTLVLIS. Over 142–159 the chain is Cytoplasmic; that stretch reads LDRFALVILPVWAQNHRS. A helical transmembrane segment spans residues 160–180; sequence ITLAWLLCGLVWVLGLLLSLP. The Extracellular segment spans residues 181-220; it reads SMIYREIVVHDDMNITLCIYNHLQDKTEGNQSAIKAIHVT. The chain crosses the membrane as a helical span at residues 221 to 241; sequence RLILGFLIPLLVIAVCYLLIG. Residues 242–256 are Cytoplasmic-facing; the sequence is RRVSSGRFKSQRAFQ. Residues 257 to 277 form a helical membrane-spanning segment; the sequence is IILVVVTTFFVCWLPYHVIGL. The Extracellular portion of the chain corresponds to 278–295; sequence VIEYGKEASQVMARALDP. A helical transmembrane segment spans residues 296-316; sequence LAISLAYVNSCLNPVLYVFMG. Over 317-364 the chain is Cytoplasmic; it reads QDFKERVRVSLRKIFEKVFSEDVTLRSSVYSKGQSQLSRATNSSEAQV.

Belongs to the G-protein coupled receptor 1 family.

It is found in the cell membrane. Functionally, receptor for the chemotactic and inflammatory peptide anaphylatoxin C3a. This receptor stimulates chemotaxis, granule enzyme release and superoxide anion production. This chain is C3a anaphylatoxin chemotactic receptor (c3ar1), found in Oncorhynchus mykiss (Rainbow trout).